A 263-amino-acid polypeptide reads, in one-letter code: R-spondin-1 (263 aa).

The N-terminal stretch at 1 to 20 is a signal peptide; that stretch reads MRLGLCVVALVLSWTHLTIS. FU repeat units lie at residues 34 to 85 and 91 to 135; these read AEGS…GYFD and MNKC…GSSA. 11 disulfides stabilise this stretch: C40–C47, C44–C53, C56–C75, C79–C94, C97–C105, C102–C111, C114–C125, C129–C142, C148–C190, C159–C166, and C199–C206. N-linked (GlcNAc...) asparagine glycosylation is present at N137. The region spanning 147–207 is the TSP type-1 domain; that stretch reads QCEMSEWSPW…RCTVRRVPCP (61 aa). C-linked (Man) tryptophan glycosylation is found at W153 and W156. Residues 206–263 are disordered; that stretch reads CPEGQKRRKGGQGRRENANRNLARKESKEAGAGSRRRKGQQQQQQQGTVGPLTSAGPA. Basic and acidic residues predominate over residues 218-234; sequence GRRENANRNLARKESKE.

The protein belongs to the R-spondin family. As to quaternary structure, interacts with the extracellular domain of FZD8 and LRP6. It however does not form a ternary complex with FZD8 and LRP6. Interacts with WNT1. Binds heparin. Interacts with ZNRF3; promoting indirect interaction between ZNRF3 and LGR4 and membrane clearance of ZNRF3. Interacts with LGR4, LGR5 and LGR6. Identified in a complex composed of RNF43, LGR5 and RSPO1. Interacts (via FU repeats) with KREM1. In terms of processing, C-, and N-glycosylated. N-glycosylation at Asn-137, negatively influences its secretion and enhancing effect on Wnt/beta-catenin signaling. C-mannosylation at Trp-156 by DPY19L3 is required for its secretion and regulates the enhancing activity of Wnt signaling. As to expression, abundantly expressed in adrenal glands, ovary, testis, thyroid and trachea but not in bone marrow, spinal cord, stomach, leukocytes colon, small intestine, prostate, thymus and spleen.

The protein resides in the secreted. It is found in the nucleus. Its function is as follows. Activator of the canonical Wnt signaling pathway by acting as a ligand for LGR4-6 receptors. Upon binding to LGR4-6 (LGR4, LGR5 or LGR6), LGR4-6 associate with phosphorylated LRP6 and frizzled receptors that are activated by extracellular Wnt receptors, triggering the canonical Wnt signaling pathway to increase expression of target genes. Also regulates the canonical Wnt/beta-catenin-dependent pathway and non-canonical Wnt signaling by acting as an inhibitor of ZNRF3, an important regulator of the Wnt signaling pathway. Acts as a ligand for frizzled FZD8 and LRP6. May negatively regulate the TGF-beta pathway. Has a essential roles in ovary determination. Regulates Wnt signaling by antagonizing DKK1/KREM1-mediated internalization of LRP6 through an interaction with KREM1. The sequence is that of R-spondin-1 (RSPO1) from Homo sapiens (Human).